Consider the following 421-residue polypeptide: Peptide chain release factor subunit 1 (421 aa).

Belongs to the eukaryotic release factor 1 family. As to quaternary structure, heterodimer of two subunits, one of which binds GTP.

Its subcellular location is the cytoplasm. Functionally, directs the termination of nascent peptide synthesis (translation) in response to the termination codons UAA, UAG and UGA. In Methanocaldococcus jannaschii (strain ATCC 43067 / DSM 2661 / JAL-1 / JCM 10045 / NBRC 100440) (Methanococcus jannaschii), this protein is Peptide chain release factor subunit 1 (prf1).